Reading from the N-terminus, the 372-residue chain is Queuine tRNA-ribosyltransferase (372 aa).

Catalysis depends on Asp-89, which acts as the Proton acceptor. Substrate contacts are provided by residues 89–93 (DSGGF), Asp-161, and Gly-232. Residues 262-268 (GIGDLPS) are RNA binding. Asp-281 serves as the catalytic Nucleophile. The segment at 286–290 (TKAAR) is RNA binding; important for wobble base 34 recognition. Residues Cys-319, Cys-321, Cys-324, and His-351 each contribute to the Zn(2+) site.

The protein belongs to the queuine tRNA-ribosyltransferase family. In terms of assembly, homodimer. Within each dimer, one monomer is responsible for RNA recognition and catalysis, while the other monomer binds to the replacement base PreQ1. Requires Zn(2+) as cofactor.

The enzyme catalyses 7-aminomethyl-7-carbaguanine + guanosine(34) in tRNA = 7-aminomethyl-7-carbaguanosine(34) in tRNA + guanine. Its pathway is tRNA modification; tRNA-queuosine biosynthesis. Its function is as follows. Catalyzes the base-exchange of a guanine (G) residue with the queuine precursor 7-aminomethyl-7-deazaguanine (PreQ1) at position 34 (anticodon wobble position) in tRNAs with GU(N) anticodons (tRNA-Asp, -Asn, -His and -Tyr). Catalysis occurs through a double-displacement mechanism. The nucleophile active site attacks the C1' of nucleotide 34 to detach the guanine base from the RNA, forming a covalent enzyme-RNA intermediate. The proton acceptor active site deprotonates the incoming PreQ1, allowing a nucleophilic attack on the C1' of the ribose to form the product. After dissociation, two additional enzymatic reactions on the tRNA convert PreQ1 to queuine (Q), resulting in the hypermodified nucleoside queuosine (7-(((4,5-cis-dihydroxy-2-cyclopenten-1-yl)amino)methyl)-7-deazaguanosine). The chain is Queuine tRNA-ribosyltransferase from Chlamydia felis (strain Fe/C-56) (Chlamydophila felis).